Here is a 120-residue protein sequence, read N- to C-terminus: UPF0102 protein Pfl01_4685 (120 aa).

This sequence belongs to the UPF0102 family.

This Pseudomonas fluorescens (strain Pf0-1) protein is UPF0102 protein Pfl01_4685.